Here is a 155-residue protein sequence, read N- to C-terminus: Small ribosomal subunit protein uS7 (155 aa).

Belongs to the universal ribosomal protein uS7 family. Part of the 30S ribosomal subunit. Contacts proteins S9 and S11.

Its function is as follows. One of the primary rRNA binding proteins, it binds directly to 16S rRNA where it nucleates assembly of the head domain of the 30S subunit. Is located at the subunit interface close to the decoding center, probably blocks exit of the E-site tRNA. The chain is Small ribosomal subunit protein uS7 from Mycoplasmoides gallisepticum (strain R(low / passage 15 / clone 2)) (Mycoplasma gallisepticum).